A 256-amino-acid polypeptide reads, in one-letter code: Protein FixA (256 aa).

The protein belongs to the ETF beta-subunit/FixA family. In terms of assembly, heterodimer of FixA and FixB.

It functions in the pathway amine and polyamine metabolism; carnitine metabolism. Its function is as follows. Required for anaerobic carnitine reduction. May bring reductant to CaiA. The polypeptide is Protein FixA (Salmonella agona (strain SL483)).